The following is a 1067-amino-acid chain: Cadmium/zinc-transporting ATPase HMA2 (1067 aa).

One can recognise an HMA domain in the interval 9–75; that stretch reads QKSYFDVLGI…ALNQARLEAS (67 aa). Transmembrane regions (helical) follow at residues 94–114, 117–137, 140–160, 162–182, 313–333, 342–362, 649–669, and 673–693; these read YVLL…WHPL, FALV…IAAI, LTLD…ALKD, SEAG…TRAS, YTPA…IAKA, LALV…TPIA, IIVN…LAFA, and LIWA…MYSM. 3 disordered regions span residues 711-739, 760-790, and 960-996; these read HHGS…HHCS, HDHH…SHGH, and NDTH…GHHP. Basic residues predominate over residues 724–735; that stretch reads HGSHAKKNHGVS. 2 stretches are compositionally biased toward basic and acidic residues: residues 760-774 and 975-996; these read HDHH…EPAH and SSDH…GHHP.

It belongs to the cation transport ATPase (P-type) (TC 3.A.3) family. Type IB subfamily. As to expression, in roots, localizes at the pericycle cells. In nodes, localizes in the phloem parenchyma and companion cells of both enlarged and diffuse vascular bundles.

It is found in the cell membrane. The catalysed reaction is Zn(2+)(in) + ATP + H2O = Zn(2+)(out) + ADP + phosphate + H(+). It catalyses the reaction Cd(2+)(in) + ATP + H2O = Cd(2+)(out) + ADP + phosphate + H(+). Its function is as follows. Zinc/cadmium transporter that plays an essential role in promoting translocation of zinc and cadmium from roots to shoots. May control cadmium loading into xylem. In roots, transports zinc and cadmium from the apoplast to the symplast to facilitate translocation via the phloem. In nodes, functions to load zinc and cadmium to the phloem for the preferential distribution to the upper nodes and panicles. In Oryza sativa subsp. japonica (Rice), this protein is Cadmium/zinc-transporting ATPase HMA2.